A 207-amino-acid chain; its full sequence is Ribosomal RNA small subunit methyltransferase G (207 aa).

Residues Gly71, Phe76, 122-123 (AE), and Arg135 contribute to the S-adenosyl-L-methionine site.

This sequence belongs to the methyltransferase superfamily. RNA methyltransferase RsmG family.

The protein resides in the cytoplasm. Specifically methylates the N7 position of a guanine in 16S rRNA. This Cytophaga hutchinsonii (strain ATCC 33406 / DSM 1761 / CIP 103989 / NBRC 15051 / NCIMB 9469 / D465) protein is Ribosomal RNA small subunit methyltransferase G.